A 419-amino-acid polypeptide reads, in one-letter code: Probable 3-isopropylmalate dehydratase large subunit (419 aa).

Positions 299, 359, and 362 each coordinate [4Fe-4S] cluster.

This sequence belongs to the aconitase/IPM isomerase family. LeuC type 2 subfamily. In terms of assembly, heterodimer of LeuC and LeuD. [4Fe-4S] cluster is required as a cofactor.

It carries out the reaction (2R,3S)-3-isopropylmalate = (2S)-2-isopropylmalate. The protein operates within amino-acid biosynthesis; L-leucine biosynthesis; L-leucine from 3-methyl-2-oxobutanoate: step 2/4. In terms of biological role, catalyzes the isomerization between 2-isopropylmalate and 3-isopropylmalate, via the formation of 2-isopropylmaleate. In Methanothermobacter thermautotrophicus (strain ATCC 29096 / DSM 1053 / JCM 10044 / NBRC 100330 / Delta H) (Methanobacterium thermoautotrophicum), this protein is Probable 3-isopropylmalate dehydratase large subunit.